A 248-amino-acid chain; its full sequence is Probable septum site-determining protein MinC (248 aa).

The segment at 94–125 (GMPPAMRGGQPAADFEAPAGEPQANPGAPEPQ) is disordered.

It belongs to the MinC family. Interacts with MinD and FtsZ.

In terms of biological role, cell division inhibitor that blocks the formation of polar Z ring septums. Rapidly oscillates between the poles of the cell to destabilize FtsZ filaments that have formed before they mature into polar Z rings. Prevents FtsZ polymerization. The sequence is that of Probable septum site-determining protein MinC from Brucella abortus (strain S19).